Reading from the N-terminus, the 591-residue chain is Ferric-chelate reductase 1 (591 aa).

A helical transmembrane segment spans residues 6–26 (FTVSAFILLLHVSFVANYPSG). Residues 13–179 (LLLHVSFVAN…FTTPEATIAP (167 aa)) form the Reelin domain. Residues Asn-50, Asn-85, Asn-308, Asn-321, and Asn-353 are each glycosylated (N-linked (GlcNAc...) asparagine). Positions 216–331 (ERACVLLSFT…ASYYIFVADG (116 aa)) constitute a DOMON domain. Residues 335–533 (DGRIHKHSQQ…VGTEIILEIH (199 aa)) enclose the Cytochrome b561 domain. Residues 372-392 (VHGALMFVAWMTTVSVGVLIA) form a helical membrane-spanning segment. The heme b site is built by His-373 and His-413. The next 2 membrane-spanning stretches (helical) occupy residues 416–436 (LMLTTSALTFIAFLLPFIYRG) and 445–465 (HPYLGFIVMVLAVLQLLLAAF). His-445 and His-481 together coordinate heme b. 3 consecutive transmembrane segments (helical) span residues 490-510 (IIAVAAMFLGMDLPGLNLPGP), 514-534 (YAMIGFVAWHVGTEIILEIHA), and 568-588 (VVLAIYVCGNLTFLTMFLSAI).

It belongs to the FRRS1 family. Heme b is required as a cofactor.

It localises to the membrane. Ferric-chelate reductases reduce Fe(3+) to Fe(2+) before its transport from the endosome to the cytoplasm. The polypeptide is Ferric-chelate reductase 1 (FRRS1) (Bos taurus (Bovine)).